We begin with the raw amino-acid sequence, 262 residues long: Snake venom serine proteinase 9 (262 aa).

Residues 1 to 18 form the signal peptide; that stretch reads MVLIRVLANLLILQLSYA. Positions 19–24 are excised as a propeptide; it reads QKSSEL. The Peptidase S1 domain occupies 25–253; sequence VIGGDECNID…HLDWIQSIIA (229 aa). Cystine bridges form between C31–C165, C52–C68, C144–C214, C176–C193, and C204–C229. The Charge relay system role is filled by H67. Residue N105 is glycosylated (N-linked (GlcNAc...) asparagine). Catalysis depends on D112, which acts as the Charge relay system. The active-site Charge relay system is S208.

The protein belongs to the peptidase S1 family. Snake venom subfamily. Monomer. Expressed by the venom gland.

It is found in the secreted. In terms of biological role, snake venom serine protease that may act in the hemostasis system of the prey. The polypeptide is Snake venom serine proteinase 9 (Crotalus adamanteus (Eastern diamondback rattlesnake)).